The sequence spans 349 residues: UDP-3-O-acylglucosamine N-acyltransferase (349 aa).

Histidine 246 serves as the catalytic Proton acceptor.

It belongs to the transferase hexapeptide repeat family. LpxD subfamily. In terms of assembly, homotrimer.

The catalysed reaction is a UDP-3-O-[(3R)-3-hydroxyacyl]-alpha-D-glucosamine + a (3R)-hydroxyacyl-[ACP] = a UDP-2-N,3-O-bis[(3R)-3-hydroxyacyl]-alpha-D-glucosamine + holo-[ACP] + H(+). It participates in bacterial outer membrane biogenesis; LPS lipid A biosynthesis. Functionally, catalyzes the N-acylation of UDP-3-O-acylglucosamine using 3-hydroxyacyl-ACP as the acyl donor. Is involved in the biosynthesis of lipid A, a phosphorylated glycolipid that anchors the lipopolysaccharide to the outer membrane of the cell. This is UDP-3-O-acylglucosamine N-acyltransferase from Trichormus variabilis (strain ATCC 29413 / PCC 7937) (Anabaena variabilis).